The sequence spans 510 residues: MVSSLNNLGVLLPIEGVIILVFVLSCFSLAIKRLYFSPLAKFPGPKLAALTMWYEFYYDVVKRGNYFRQIAKMHDQYGPVVRINPFELHVNDPTFYPILYSSSTKKRDKWSWAAGMFGNNTSVFSTVPHDHHRIRRAALNPLFSRTAIKQLEPTIKCQMHELSRRLDSFCESGMVLDLGLAFTVFAADVISAYCFGEPFGLLQDPDFAPEWVETVAAPSELGHLIKQFPWALGLFRLLPRSLIGVISPAIVRLYTIQEWMSLNVQSLISKRHDDHSSSAKSCVFEALLRSKLPASEKTVDRLKGEGQTLIGAGTLTTANVLKHVVFHTLDNPDRLHALAAELEAEFPDPNEDVSLDRLERLPLLTAYIKEALRLGYGVTHRLQLLADEPLHCNGMIIPPRTPVGMTSIFMHDDPTVFPNPREFDPDRWLGEVEDRRHLERCFVPFSKGTRMCLGMHLAWAEIYIVIATVFRSYSFQLHDTDRSHIEMAHDFFDPAPKLDSKGLRVTVQRK.

Residues L11–I31 traverse the membrane as a helical segment. C452 contributes to the heme binding site.

This sequence belongs to the cytochrome P450 family. Heme is required as a cofactor.

Its subcellular location is the membrane. It functions in the pathway secondary metabolite biosynthesis. In terms of biological role, tryptophan 6-hydroxylase; part of the fragmented gene cluster that mediates the biosynthesis of fusarochromene, a tryptophan-derived metabolite closely related to a group of mycotoxins including fusarochromanone. Within the pathway, fscE hydroxalates the first intermediate D-tryptophan to yield 6-hydroxytryptophan. The first step of the pathway is the epimerization of L-tryptophan to D-tryptophan in the presence of the NRPS-like tryptophan epimerase fscC. D-tryptophan is subsequently hydroxylated by the tryptophan 6-hydroxylase fscE to yield 6-hydroxytryptophan. The pyrrole ring undergoes cleavaged by the tryptophan 2,3-dioxygenase fscD and is finally converted to 4-hydroxykyrunenine by the hydrolase fscH. The NRPS-like oxidoreductase fscA reduces the carboxyl group to primary alcohol and the DMATS-type prenyltransferase fscG performs prenylation, followed by the formation of a chromene ring catalyzed by the oxidoreductase fscI, which leads to desacetylfusarochromene. Epoxidation by fscF and rearrangement reactions of chromene double bonds convert compound desacetylfusarochromene to fusarochromanones. Although specific acetyltransferases were not found near the fsc gene cluster, several predicted enzymes containing the N-acetyltransferase superfamily domain are present in the genome of F.equiseti. These predicted enzymes may have the potential to convert desacetylfusarochromene to fusarochromene. The protein is Tryptophan 6-hydroxylase fscE of Fusarium equiseti (Fusarium scirpi).